Consider the following 536-residue polypeptide: Putative cysteine ligase BshC (536 aa).

The protein belongs to the BshC family.

Functionally, involved in bacillithiol (BSH) biosynthesis. May catalyze the last step of the pathway, the addition of cysteine to glucosamine malate (GlcN-Mal) to generate BSH. The protein is Putative cysteine ligase BshC of Anoxybacillus flavithermus (strain DSM 21510 / WK1).